Consider the following 226-residue polypeptide: ATP synthase F(0) complex subunit a (226 aa).

6 helical membrane-spanning segments follow: residues 12–32 (PTMMGLPIVILIVLFPSILFP), 68–88 (WALMLISLILFIGSTNLLGLL), 97–117 (QLSMNLGMAIPLWAGTVITGF), 138–158 (IPMLVIIETISLFIQPMALAV), 164–184 (ITAGHLLIHLIGGATLALMDI), and 189–209 (AFITFTILILLTILEFAVALI).

This sequence belongs to the ATPase A chain family. In terms of assembly, component of the ATP synthase complex composed at least of ATP5F1A/subunit alpha, ATP5F1B/subunit beta, ATP5MC1/subunit c (homooctomer), MT-ATP6/subunit a, MT-ATP8/subunit 8, ATP5ME/subunit e, ATP5MF/subunit f, ATP5MG/subunit g, ATP5MK/subunit k, ATP5MJ/subunit j, ATP5F1C/subunit gamma, ATP5F1D/subunit delta, ATP5F1E/subunit epsilon, ATP5PF/subunit F6, ATP5PB/subunit b, ATP5PD/subunit d, ATP5PO/subunit OSCP. ATP synthase complex consists of a soluble F(1) head domain (subunits alpha(3) and beta(3)) - the catalytic core - and a membrane F(0) domain - the membrane proton channel (subunits c, a, 8, e, f, g, k and j). These two domains are linked by a central stalk (subunits gamma, delta, and epsilon) rotating inside the F1 region and a stationary peripheral stalk (subunits F6, b, d, and OSCP). Interacts with DNAJC30; interaction is direct.

It is found in the mitochondrion inner membrane. It carries out the reaction H(+)(in) = H(+)(out). Its function is as follows. Subunit a, of the mitochondrial membrane ATP synthase complex (F(1)F(0) ATP synthase or Complex V) that produces ATP from ADP in the presence of a proton gradient across the membrane which is generated by electron transport complexes of the respiratory chain. ATP synthase complex consist of a soluble F(1) head domain - the catalytic core - and a membrane F(1) domain - the membrane proton channel. These two domains are linked by a central stalk rotating inside the F(1) region and a stationary peripheral stalk. During catalysis, ATP synthesis in the catalytic domain of F(1) is coupled via a rotary mechanism of the central stalk subunits to proton translocation. With the subunit c (ATP5MC1), forms the proton-conducting channel in the F(0) domain, that contains two crucial half-channels (inlet and outlet) that facilitate proton movement from the mitochondrial intermembrane space (IMS) into the matrix. Protons are taken up via the inlet half-channel and released through the outlet half-channel, following a Grotthuss mechanism. The chain is ATP synthase F(0) complex subunit a from Phoca vitulina (Harbor seal).